Consider the following 422-residue polypeptide: Nucleoside transporter 1 (422 aa).

Residues 1 to 38 lie on the Cytoplasmic side of the membrane; sequence MSTGKESSKAYADIESRGDYKDDGKKGSTLSSKQHFML. A helical membrane pass occupies residues 39–59; it reads SLTFILIGLSSLNVWNTALGL. Trp-53 lines the inosine pocket. Residues 60–63 are Extracellular-facing; the sequence is NINF. The chain crosses the membrane as a helical span at residues 64–82; it reads KYNTFQITGLVCSSIVALF. Residues 83–87 are Cytoplasmic-facing; the sequence is VEIPK. The helical transmembrane segment at 88 to 107 threads the bilayer; sequence IMLPFLLGGLSILCAGFQIS. The Extracellular portion of the chain corresponds to 108–116; sequence HSFFTDTQF. The chain crosses the membrane as a helical span at residues 117-139; sequence DTYCLVAFIVIGVVAGLAQTIAF. An inosine-binding site is contributed by Gln-135. The Cytoplasmic portion of the chain corresponds to 140–149; sequence NIGSTMEDNM. A helical membrane pass occupies residues 150–174; sequence GGYMSAGIGISGVFIFVINLLLDQF. Residues 175–185 lie on the Extracellular side of the membrane; it reads VSPEKHYGVNK. A helical transmembrane segment spans residues 186-208; sequence AKLLYLYIICELCLILAIVFCVC. Residues 209–241 are Cytoplasmic-facing; the sequence is NLDLTNKNNKKDEENKENNATLSYMELFKDSYK. A helical membrane pass occupies residues 242–265; the sequence is AILTMFLVNWLTLQLFPGVGHKKW. The Extracellular segment spans residues 266–274; that stretch reads QESHNISDY. A helical membrane pass occupies residues 275–294; sequence NVTIIVGMFQVFDFLSRYPP. Residues Asp-287 and Arg-291 each contribute to the inosine site. The Cytoplasmic portion of the chain corresponds to 295–309; it reads NLTHIKIFKNFTFSL. The helical transmembrane segment at 310–330 threads the bilayer; the sequence is NKLLVANSLRLLFIPWFILNA. Residues 331-338 lie on the Extracellular side of the membrane; sequence CVDHPFFK. Residues 339 to 362 traverse the membrane as a helical segment; it reads NIVQQCVCMAMLAFTNGWFNTVPF. The Cytoplasmic portion of the chain corresponds to 363–374; that stretch reads LVFVKELKKAKK. The helical transmembrane segment at 375–397 threads the bilayer; the sequence is KKEIEIISTFLVIAMFVGLFCGI. The Extracellular portion of the chain corresponds to 398–422; that stretch reads WTTYIYNLFNIVLPKPDLPPIDVTQ.

This sequence belongs to the SLC29A/ENT transporter (TC 2.A.57) family.

It is found in the cell membrane. The enzyme catalyses inosine(in) = inosine(out). It carries out the reaction adenosine(in) = adenosine(out). The catalysed reaction is hypoxanthine(out) = hypoxanthine(in). It catalyses the reaction guanosine(in) = guanosine(out). The enzyme catalyses guanine(out) = guanine(in). It carries out the reaction thymidine(in) = thymidine(out). The catalysed reaction is uridine(out) = uridine(in). It catalyses the reaction uracil(in) = uracil(out). The enzyme catalyses thymine(out) = thymine(in). It carries out the reaction adenine(out) = adenine(in). The catalysed reaction is cytosine(out) = cytosine(in). It catalyses the reaction xanthine(out) = xanthine(in). GSK4 (5-methyl-N-[2-(2-oxo-1-azepanyl)ethyl]-2-phenyl-1,3-oxazole-4-carbox-amide) disrupts the transport activity at 500 nM. Inhibited partially by 10 uM dipyridamole. Inhibited partially by N,N'-1,3-benzothiazole-2,6-diyldi(2-furamide), 2-bromo-N-(4-[1,3]oxazolo[4,5-b]pyridin-2-ylphenyl)benzamide, 4-methyl-7-[(3,4,5-trimethoxybenzyl)oxy]-2H-chromen-2-one, 2-(1-methyl-1H-indol-3-yl)-2-oxo-N-[4-(pyrrolidin-1-ylcarbonyl)phenyl]acet amide and 2-[2-(2-methylphenyl)vinyl]-4(3H)-quinazolinone. Functionally, sodium-independent nucleoside and nucleobase transporter with a broad substrate specificity. Plays a key role in the utilization of host purine sources by P.falciparum during intraerythrocytic development enabling parasite growth in the presence of physiological concentrations of adenosine, inosine, guanine, guanosine, xanthine and hypoxanthine. Essential for parasite transition from ring to trophozoite or from trophozoite to schizont stage but not for erythrocyte invasion by merozoites. This is Nucleoside transporter 1 from Plasmodium falciparum (isolate 3D7).